A 141-amino-acid polypeptide reads, in one-letter code: Hemoglobin subunit alpha-1/2 (141 aa).

The region spanning 1 to 141 is the Globin domain; that stretch reads VLSPADKTNV…VSTVLTSKYR (141 aa). Serine 3 is modified (phosphoserine). Lysine 7 bears the N6-succinyllysine mark. Threonine 8 carries the phosphothreonine modification. Position 11 is an N6-succinyllysine (lysine 11). Lysine 16 is modified (N6-acetyllysine; alternate). Lysine 16 carries the post-translational modification N6-succinyllysine; alternate. Tyrosine 24 is subject to Phosphotyrosine. The residue at position 35 (serine 35) is a Phosphoserine. An N6-succinyllysine modification is found at lysine 40. Serine 49 carries the post-translational modification Phosphoserine. Histidine 58 is an O2 binding site. Residue histidine 87 participates in heme b binding. At serine 102 the chain carries Phosphoserine. Residue threonine 108 is modified to Phosphothreonine. Phosphoserine occurs at positions 124 and 131. A phosphothreonine mark is found at threonine 134 and threonine 137. Residue serine 138 is modified to Phosphoserine.

The protein belongs to the globin family. As to quaternary structure, heterotetramer of two alpha chains and two beta chains. As to expression, red blood cells.

Involved in oxygen transport from the lung to the various peripheral tissues. The sequence is that of Hemoglobin subunit alpha-1/2 from Macaca sinica (Toque macaque).